A 1464-amino-acid chain; its full sequence is Collagen alpha-1(III) chain (1464 aa).

Residues 1-23 form the signal peptide; it reads MMSFVQSGTWFLLTLLHPTLILA. Residues 24 to 154 constitute a propeptide, N-terminal propeptide; the sequence is QQSNVDELGC…CPTGGQNYSP (131 aa). A VWFC domain is found at 31 to 90; sequence LGCSHLGQSYESRDVWKPEPCQICVCDSGSVLCDDIICDEEPLDCPNPEIPFGECCAICP. The tract at residues 97-1195 is disordered; it reads PVLPDGHGPQ…PGPPGAPGPC (1099 aa). Residues 100 to 109 are compositionally biased toward low complexity; it reads PDGHGPQGPK. Positions 147–156 are enriched in polar residues; the sequence is TGGQNYSPQF. Positions 155–169 are nonhelical region (N-terminal); sequence QFDSYDVKSGVGGMG. Residues 164–173 show a composition bias toward gly residues; it reads GVGGMGGYPG. Residues 170 to 1195 are triple-helical region; that stretch reads GYPGPAGPPG…PGPPGAPGPC (1026 aa). Residues 174 to 184 are compositionally biased toward pro residues; it reads PAGPPGPPGPP. Positions 186-198 are enriched in low complexity; sequence SSGHPGSPGSPGY. A compositionally biased stretch (basic and acidic residues) spans 228 to 240; the sequence is KDGESGRPGRPGE. Lys262 carries the post-translational modification 5-hydroxylysine; alternate. O-linked (Gal...) hydroxylysine; alternate glycosylation occurs at Lys262. Residues 265–276 are compositionally biased toward basic and acidic residues; it reads RGFDGRNGEKGE. The residue at position 283 (Lys283) is a 5-hydroxylysine. 2 stretches are compositionally biased toward low complexity: residues 310–321 and 354–379; these read PGLPGAAGARGN and PAGS…AGAQ. The span at 389–398 shows a compositional bias: gly residues; sequence GSPGGKGEMG. A compositionally biased stretch (low complexity) spans 399–412; it reads PAGIPGAPGLIGAR. Positions 527 to 548 are enriched in gly residues; that stretch reads GTPGGPGIRGMPGSPGGPGNDG. Residues 606 to 615 are compositionally biased toward low complexity; that stretch reads PAGKNGETGP. Gly residues-rich tracts occupy residues 641–650 and 668–677; these read GIPGTGGPPG and GAPGGKGDSG. Residues 678–691 are compositionally biased toward low complexity; it reads APGERGPPGTAGIP. Residues 692–708 are compositionally biased toward gly residues; sequence GARGGAGPPGPEGGKGP. The segment covering 717–727 has biased composition (low complexity); the sequence is ASGSPGLQGMP. A compositionally biased stretch (basic and acidic residues) spans 822 to 834; sequence AKGERGAPGEKGE. Position 859 is a 5-hydroxylysine (Lys859). The span at 863-879 shows a compositional bias: gly residues; that stretch reads GSPGGPGTAGFPGGRGL. Pro residues predominate over residues 889 to 906; that stretch reads PGPPGPSGAPGKDGPPGP. Composition is skewed to low complexity over residues 907–934 and 945–960; these read AGNS…KGPP and PLGI…LAGP. Lys976 carries the 5-hydroxylysine modification. The segment covering 1045–1054 has biased composition (pro residues); that stretch reads PGHPGPPGPV. Over residues 1068-1084 the composition is skewed to low complexity; that stretch reads PAGPSGAPGPAGARGAP. 5-hydroxylysine is present on residues Lys1093 and Lys1105. The segment covering 1120–1132 has biased composition (low complexity); sequence PGAAGHQGAIGSP. A compositionally biased stretch (pro residues) spans 1180–1192; it reads PGQPGPPGPPGAP. A propeptide spans 1220-1464 (C-terminal propeptide); the sequence is DDPMDFKINT…GVDIGPVCFL (245 aa). Residues 1230–1464 enclose the Fibrillar collagen NC1 domain; that stretch reads EEIMSSLKSV…GVDIGPVCFL (235 aa). 3 disulfides stabilise this stretch: Cys1260-Cys1292, Cys1300-Cys1462, and Cys1370-Cys1415. 5 residues coordinate Ca(2+): Asp1278, Asn1280, Gln1281, Cys1283, and Asp1286.

The protein belongs to the fibrillar collagen family. In terms of assembly, trimers of identical alpha 1(III) chains. The chains are linked to each other by interchain disulfide bonds. Trimers are also cross-linked via hydroxylysines. Interacts with ADGRG1. In terms of processing, proline residues at the third position of the tripeptide repeating unit (G-X-Y) are hydroxylated in some or all of the chains. Post-translationally, O-linked glycan consists of a Glc-Gal disaccharide bound to the oxygen atom of a post-translationally added hydroxyl group. Expressed in embryonic brain, specifically in the meninges, pial basement membrane and blood vessels (at protein level).

It localises to the secreted. Its subcellular location is the extracellular space. The protein resides in the extracellular matrix. Functionally, collagen type III occurs in most soft connective tissues along with type I collagen. Involved in regulation of cortical development. Is the major ligand of ADGRG1 in the developing brain and binding to ADGRG1 inhibits neuronal migration and activates the RhoA pathway by coupling ADGRG1 to GNA13 and possibly GNA12. The polypeptide is Collagen alpha-1(III) chain (Col3a1) (Mus musculus (Mouse)).